Consider the following 184-residue polypeptide: Photosystem I assembly protein Ycf4 (184 aa).

2 consecutive transmembrane segments (helical) span residues 19-39 and 57-77; these read LSNF…LLVG and FIFF…LFIS.

This sequence belongs to the Ycf4 family.

It is found in the plastid. It localises to the chloroplast thylakoid membrane. Functionally, seems to be required for the assembly of the photosystem I complex. This Jasminum nudiflorum (Winter jasmine) protein is Photosystem I assembly protein Ycf4.